A 531-amino-acid chain; its full sequence is Plant UBX domain-containing protein 11 (531 aa).

N-acetylmethionine is present on M1. Over residues 160–173 (AVASPSTASSVQPS) the composition is skewed to low complexity. Disordered stretches follow at residues 160–316 (AVAS…KASD) and 441–531 (ANAS…NDRR). 2 stretches are compositionally biased toward polar residues: residues 174 to 190 (ETKS…NNDG) and 201 to 214 (EPSN…NQPA). Positions 290–301 (VDTKETMKPKDE) are enriched in basic and acidic residues. The 79-residue stretch at 312–390 (KKASDVHLNI…RLFDRQALVV (79 aa)) folds into the UBX domain. Polar residues-rich tracts occupy residues 441–478 (ANAS…GRSN) and 486–496 (TSRIGSNIHTL).

As to quaternary structure, interacts with CDC48A.

This is Plant UBX domain-containing protein 11 from Arabidopsis thaliana (Mouse-ear cress).